Here is a 121-residue protein sequence, read N- to C-terminus: Cytochrome B5-like protein (121 aa).

Residues 1–21 traverse the membrane as a helical segment; it reads MIAVIGLLLGFLVSALFLIQG. Residues 24 to 49 form a disordered region; that stretch reads RRTNDNQEKKRSSSEPVEDVVRPKSY. Over residues 26–36 the composition is skewed to basic and acidic residues; the sequence is TNDNQEKKRSS. A Cytochrome b5 heme-binding domain is found at 46 to 121; that stretch reads PKSYSKSEVA…IEDFYIGELH (76 aa). Heme-binding residues include histidine 81 and histidine 104.

This sequence belongs to the cytochrome b5 family.

The protein resides in the membrane. This is Cytochrome B5-like protein from Arabidopsis thaliana (Mouse-ear cress).